A 430-amino-acid polypeptide reads, in one-letter code: Adenylosuccinate synthetase (430 aa).

GTP contacts are provided by residues G13–K19 and G41–T43. D14 functions as the Proton acceptor in the catalytic mechanism. The Mg(2+) site is built by D14 and G41. IMP is bound by residues D14–K17, N39–H42, T130, R144, Q225, T240, and R304. H42 functions as the Proton donor in the catalytic mechanism. Residue A300 to R306 coordinates substrate. Residues R306, K332–D334, and S414–G416 contribute to the GTP site.

Belongs to the adenylosuccinate synthetase family. In terms of assembly, homodimer. It depends on Mg(2+) as a cofactor.

The protein resides in the cytoplasm. It catalyses the reaction IMP + L-aspartate + GTP = N(6)-(1,2-dicarboxyethyl)-AMP + GDP + phosphate + 2 H(+). The protein operates within purine metabolism; AMP biosynthesis via de novo pathway; AMP from IMP: step 1/2. In terms of biological role, plays an important role in the de novo pathway of purine nucleotide biosynthesis. Catalyzes the first committed step in the biosynthesis of AMP from IMP. This is Adenylosuccinate synthetase from Pseudomonas syringae pv. syringae (strain B728a).